Consider the following 241-residue polypeptide: Probable transcriptional regulatory protein Daro_4067 (241 aa).

A disordered region spans residues 1–22 (MAGHSKWANIQHRKGRQDEKRG).

Belongs to the TACO1 family.

The protein resides in the cytoplasm. This chain is Probable transcriptional regulatory protein Daro_4067, found in Dechloromonas aromatica (strain RCB).